Consider the following 415-residue polypeptide: Light-independent protochlorophyllide reductase subunit N (415 aa).

[4Fe-4S] cluster-binding residues include cysteine 16, cysteine 41, and cysteine 98.

It belongs to the BchN/ChlN family. As to quaternary structure, protochlorophyllide reductase is composed of three subunits; BchL, BchN and BchB. Forms a heterotetramer of two BchB and two BchN subunits. [4Fe-4S] cluster is required as a cofactor.

It catalyses the reaction chlorophyllide a + oxidized 2[4Fe-4S]-[ferredoxin] + 2 ADP + 2 phosphate = protochlorophyllide a + reduced 2[4Fe-4S]-[ferredoxin] + 2 ATP + 2 H2O. It functions in the pathway porphyrin-containing compound metabolism; bacteriochlorophyll biosynthesis (light-independent). Functionally, component of the dark-operative protochlorophyllide reductase (DPOR) that uses Mg-ATP and reduced ferredoxin to reduce ring D of protochlorophyllide (Pchlide) to form chlorophyllide a (Chlide). This reaction is light-independent. The NB-protein (BchN-BchB) is the catalytic component of the complex. The protein is Light-independent protochlorophyllide reductase subunit N of Roseiflexus sp. (strain RS-1).